The chain runs to 444 residues: Phosphoglucosamine mutase (444 aa).

Residue S102 is the Phosphoserine intermediate of the active site. 4 residues coordinate Mg(2+): S102, D241, D243, and D245. Position 102 is a phosphoserine (S102).

The protein belongs to the phosphohexose mutase family. Requires Mg(2+) as cofactor. Post-translationally, activated by phosphorylation.

The catalysed reaction is alpha-D-glucosamine 1-phosphate = D-glucosamine 6-phosphate. Its function is as follows. Catalyzes the conversion of glucosamine-6-phosphate to glucosamine-1-phosphate. This is Phosphoglucosamine mutase from Mannheimia succiniciproducens (strain KCTC 0769BP / MBEL55E).